A 142-amino-acid chain; its full sequence is Mitochondrial import inner membrane translocase subunit TIM22-4 (142 aa).

The next 4 helical transmembrane spans lie at 21–41 (VTSGVMGGGLGLMMGLFLGAL), 70–88 (SCKTFAVMGLVFSAAECIV), 97–113 (TVNTAIAGCVTGGSMSA), and 120–137 (ACIGCAGFAIFSVLIEKF).

It belongs to the Tim17/Tim22/Tim23 family.

The protein localises to the mitochondrion inner membrane. Its function is as follows. Essential core component of the TIM22 complex, a complex that mediates the import and insertion of multi-pass transmembrane proteins into the mitochondrial inner membrane. The protein is Mitochondrial import inner membrane translocase subunit TIM22-4 (TIM22-4) of Arabidopsis thaliana (Mouse-ear cress).